A 333-amino-acid chain; its full sequence is MQISVNEFLTPRHIDVQVVSPTRAKITLEPLERGFGHTLGNALRRILLSSMPGCAVVEAEIDGVLHEYSAIEGVQEDVIEILLNLKGLAIKLHGRDEVTLTLSKKGSGVVTAADIQLDHDVEIVNPDHVIANLASNGALNMKLTVARGRGYEPADSRQSDEDESRSIGRLQLDSSFSPVRRIAYVVENARVEQRTNLDKLVIDLETNGTLDPEEAIRRAATILQQQLAAFVDLKGDSEPVVVEQEDEIDPILLRPVDDLELTVRSANCLKAENIYYIGDLIQRTEVELLKTPNLGKKSLTEIKDVLASRGLSLGMRLDNWPPASLKKDDKATA.

The segment at 1 to 234 (MQISVNEFLT…QQLAAFVDLK (234 aa)) is alpha N-terminal domain (alpha-NTD). The alpha C-terminal domain (alpha-CTD) stretch occupies residues 248–333 (IDPILLRPVD…SLKKDDKATA (86 aa)).

It belongs to the RNA polymerase alpha chain family. In terms of assembly, homodimer. The RNAP catalytic core consists of 2 alpha, 1 beta, 1 beta' and 1 omega subunit. When a sigma factor is associated with the core the holoenzyme is formed, which can initiate transcription.

It catalyses the reaction RNA(n) + a ribonucleoside 5'-triphosphate = RNA(n+1) + diphosphate. DNA-dependent RNA polymerase catalyzes the transcription of DNA into RNA using the four ribonucleoside triphosphates as substrates. The sequence is that of DNA-directed RNA polymerase subunit alpha from Pseudomonas fluorescens (strain Pf0-1).